We begin with the raw amino-acid sequence, 307 residues long: Taste receptor type 2 member 41 (307 aa).

Topologically, residues Met-1–Ala-7 are extracellular. A helical membrane pass occupies residues Phe-8–Val-28. Topologically, residues Leu-29–Arg-40 are cytoplasmic. The helical transmembrane segment at Leu-41–Val-61 threads the bilayer. The Extracellular portion of the chain corresponds to Gly-62 to His-88. Residues Trp-89–Val-109 traverse the membrane as a helical segment. Residues Lys-110 to Trp-129 lie on the Cytoplasmic side of the membrane. The chain crosses the membrane as a helical span at residues Val-130–Trp-150. Topologically, residues Val-151 to Ser-183 are extracellular. An N-linked (GlcNAc...) asparagine glycan is attached at Asn-167. Residues Leu-184–Ile-204 traverse the membrane as a helical segment. The Cytoplasmic segment spans residues Asn-205–Lys-234. The helical transmembrane segment at Ser-235–Thr-255 threads the bilayer. Residues Lys-256–Phe-264 are Extracellular-facing. Residues Tyr-265 to Phe-285 traverse the membrane as a helical segment. Over Ser-286–Ala-307 the chain is Cytoplasmic.

The protein belongs to the G-protein coupled receptor T2R family.

Its subcellular location is the membrane. Its function is as follows. Receptor that may play a role in the perception of bitterness and is gustducin-linked. May play a role in sensing the chemical composition of the gastrointestinal content. The activity of this receptor may stimulate alpha gustducin, mediate PLC-beta-2 activation and lead to the gating of TRPM5. This Pongo pygmaeus (Bornean orangutan) protein is Taste receptor type 2 member 41 (TAS2R41).